We begin with the raw amino-acid sequence, 145 residues long: D-aminoacyl-tRNA deacylase (145 aa).

The short motif at 137 to 138 is the Gly-cisPro motif, important for rejection of L-amino acids element; that stretch reads GP.

It belongs to the DTD family. Homodimer.

It localises to the cytoplasm. It catalyses the reaction glycyl-tRNA(Ala) + H2O = tRNA(Ala) + glycine + H(+). It carries out the reaction a D-aminoacyl-tRNA + H2O = a tRNA + a D-alpha-amino acid + H(+). In terms of biological role, an aminoacyl-tRNA editing enzyme that deacylates mischarged D-aminoacyl-tRNAs. Also deacylates mischarged glycyl-tRNA(Ala), protecting cells against glycine mischarging by AlaRS. Acts via tRNA-based rather than protein-based catalysis; rejects L-amino acids rather than detecting D-amino acids in the active site. By recycling D-aminoacyl-tRNA to D-amino acids and free tRNA molecules, this enzyme counteracts the toxicity associated with the formation of D-aminoacyl-tRNA entities in vivo and helps enforce protein L-homochirality. The sequence is that of D-aminoacyl-tRNA deacylase from Salmonella enteritidis PT4 (strain P125109).